We begin with the raw amino-acid sequence, 152 residues long: Acidic phospholipase A2 homolog taipoxin gamma chain (152 aa).

An N-terminal signal peptide occupies residues 1 to 19; it reads MHPAHLLVLLAVCVSLLGS. 8 disulfides stabilise this stretch: C38–C104, C42–C46, C54–C151, C56–C72, C71–C132, C78–C125, C88–C118, and C111–C123. N-linked (GlcNAc...) asparagine glycosylation is present at N97.

The protein belongs to the phospholipase A2 family. Group I subfamily. D49 sub-subfamily. Heterotrimer of alpha, beta, and gamma chains; non-covalently linked. Contains 0.9% fucose, 2.2% mannose, 4.2% N-acetyl-D-glucosamine, 3.5% galactose, and 3.8% N-acetyl-neuraminic acid (sialic acid). Expressed by the venom gland.

The protein localises to the secreted. Heterotrimer: Snake venom phospholipase A2 (PLA2) heterotrimer that acts as a potent presynaptic neurotoxin by blocking synaptic transmission and synaptic vesicle recycling. May act by binding in a calcium-dependent fashion to neurotonal pentraxin-1 (NPTX1) and neurotonal pentraxin-2 (NPTX2), but not to neuronal pentraxin receptor (NPTXR). Also binds to taipoxin-associated calcium binding protein 49 (RCN2), a protein localized in the lumen of endoplasmic reticulum. Its function is as follows. Monomer (gamma chain): Snake venom phospholipase A2 homolog that is neither toxic nor enzymatically active. Does not bind calcium. The sequence is that of Acidic phospholipase A2 homolog taipoxin gamma chain from Oxyuranus scutellatus scutellatus (Australian taipan).